The following is a 101-amino-acid chain: Small ribosomal subunit protein bS6 (101 aa).

It belongs to the bacterial ribosomal protein bS6 family.

Its function is as follows. Binds together with bS18 to 16S ribosomal RNA. In Arthrobacter sp. (strain FB24), this protein is Small ribosomal subunit protein bS6.